The primary structure comprises 241 residues: Zinc finger CCHC domain-containing protein 24 (241 aa).

Phosphoserine occurs at positions 65 and 93. A CCHC-type zinc finger spans residues 132–149 (YLCHLCFNKGHYIKDCPQ).

The chain is Zinc finger CCHC domain-containing protein 24 (ZCCHC24) from Macaca fascicularis (Crab-eating macaque).